A 495-amino-acid polypeptide reads, in one-letter code: DUF21 domain-containing protein At4g14230 (495 aa).

Over 1–42 (MHPINAVVAARMLAGISQSNALQSEAIPFGSLEWITYAGISC) the chain is Extracellular. Residues 30–212 (GSLEWITYAG…GKGGELTHDE (183 aa)) enclose the CNNM transmembrane domain. The helical transmembrane segment at 43-63 (FLVLFAGIMSGLTLGLMSLGL) threads the bilayer. At 64 to 92 (VELEILQRSGTPKEKKQSAAIFPVVQKQH) the chain is on the cytoplasmic side. The chain crosses the membrane as a helical span at residues 93–113 (QLLVTLLLFNALAMEGLPIYL). Over 114–120 (DKIFNEY) the chain is Extracellular. A helical membrane pass occupies residues 121-141 (VAIILSVTFVLFVGEVIPQAI). The Cytoplasmic portion of the chain corresponds to 142-146 (CTRYG). Residues 147-167 (LAVGANLVWLVRILMVLSYPI) traverse the membrane as a helical segment. Topologically, residues 168–495 (SFPIAKMLDW…TMTGPPQGNN (328 aa)) are extracellular. 3 CBS domains span residues 231-291 (MTPI…TGTL), 296-356 (GIRR…NNSE), and 357-426 (LTAP…IVDE). Residues 330-354 (KGKSKGHPSTLHEENSGESNVSSNN) are disordered. Asn-349 is a glycosylation site (N-linked (GlcNAc...) asparagine). Ser-352 carries the post-translational modification Phosphoserine. The N-linked (GlcNAc...) asparagine glycan is linked to Asn-353. The segment at 455-495 (SGRRLLGPKGSGGPKTPKASSTPKPDDKLMGTMTGPPQGNN) is disordered. Residues 456–477 (GRRLLGPKGSGGPKTPKASSTP) are compositionally biased toward low complexity.

Its subcellular location is the membrane. This chain is DUF21 domain-containing protein At4g14230 (CBSDUF2), found in Arabidopsis thaliana (Mouse-ear cress).